We begin with the raw amino-acid sequence, 296 residues long: Giardin subunit alpha-3 (296 aa).

4 Annexin repeats span residues 3 to 72 (DTVT…SNCW), 74 to 146 (ELPV…TWIK), 153 to 222 (NNIN…TAHY), and 226 to 295 (GMNN…VLWR).

The protein belongs to the annexin family. Giardin subunit alpha subfamily.

The protein localises to the cytoplasm. It localises to the cytoskeleton. Giardins are involved in parasite attachment to the intestinal mucosa and in the cytoskeletal disassembly and reassembly that marks the transition from infectious trophozoite to transmissible cyst. They may interact with other cytoskeletal proteins such as microtubules in the microribbons or crossbridges, to maintain the integrity of the ventral disk. The polypeptide is Giardin subunit alpha-3 (Giardia intestinalis (Giardia lamblia)).